A 236-amino-acid chain; its full sequence is Nopaline transport system permease protein NocQ (236 aa).

In terms of domain architecture, ABC transmembrane type-1 spans 21 to 222 (AMMTVVVAAC…LLSSVSNRGF (202 aa)). The next 4 membrane-spanning stretches (helical) occupy residues 25 to 45 (VVVA…FAAA), 63 to 83 (VVRG…GGTL), 102 to 122 (IFVI…TEVI), and 199 to 219 (QPFT…SVSN).

It belongs to the binding-protein-dependent transport system permease family. HisMQ subfamily.

It is found in the cell inner membrane. In terms of biological role, component of the nopaline active transport system probably consisting of four subunits: Q, M, P and T. This system is also capable of transporting octopine provided that catabolic functions are induced with nopaline. The chain is Nopaline transport system permease protein NocQ (nocQ) from Agrobacterium fabrum (strain C58 / ATCC 33970) (Agrobacterium tumefaciens (strain C58)).